The chain runs to 462 residues: Spermatogenesis- and oogenesis-specific basic helix-loop-helix-containing protein 2 (462 aa).

Residues 200-251 enclose the bHLH domain; it reads KASFLHSSKEKLRRERIKFCCEQLRTLLPYVKGRKSDVASVIEATVDYVKQV. The tract at residues 422 to 462 is disordered; sequence PASSRTASSSIFRGFRESDSGHQASQQPTGPSLQPQDSSYF. The span at 442 to 462 shows a compositional bias: polar residues; the sequence is GHQASQQPTGPSLQPQDSSYF.

It localises to the nucleus. Its function is as follows. Probable transcription factor, which may be involved in spermatogenesis and oogenesis. In Rattus norvegicus (Rat), this protein is Spermatogenesis- and oogenesis-specific basic helix-loop-helix-containing protein 2 (Sohlh2).